The chain runs to 306 residues: Glutaminase (306 aa).

Positions 61, 111, 157, 164, 188, 240, and 258 each coordinate substrate.

It belongs to the glutaminase family. Homotetramer.

It catalyses the reaction L-glutamine + H2O = L-glutamate + NH4(+). This Psychrobacter cryohalolentis (strain ATCC BAA-1226 / DSM 17306 / VKM B-2378 / K5) protein is Glutaminase.